A 335-amino-acid chain; its full sequence is Dolichyl-diphosphooligosaccharide--protein glycosyltransferase subunit MAGT1 (335 aa).

The first 29 residues, 1–29 (MASPRWFWSVCAIAAVALLLVSKVPSASA), serve as a signal peptide directing secretion. The Extracellular segment spans residues 30–184 (QRKKEMVLSE…DVNIRVIRPP (155 aa)). One can recognise a Thioredoxin domain in the interval 47-175 (WANKRPVIRM…IARWIADRTD (129 aa)). An N-linked (GlcNAc...) asparagine glycan is attached at N71. C87 and C90 are oxidised to a cystine. A helical transmembrane segment spans residues 185 to 205 (NYAGPLMLGLLLAVIGGLVYL). Topologically, residues 206-209 (RRSN) are cytoplasmic. A helical transmembrane segment spans residues 210–230 (MEFLFNKTGWAFAALCFVLAM). Topologically, residues 231-270 (TSGQMWNHIRGPPYAHKNPHTGHVNYIHGSSQAQFVAETH) are extracellular. Residues 271-291 (IVLLFNGGVTLGMVLLCEAAT) form a helical membrane-spanning segment. The Cytoplasmic segment spans residues 292–300 (SDMDIGKRR). Residues 301 to 321 (MMCIAGIGLVVLFFSWMLSIF) traverse the membrane as a helical segment. At 322-335 (RSKYHGYPYSFLMS) the chain is on the extracellular side.

It belongs to the OST3/OST6 family. In terms of assembly, accessory component of the STT3B-containing form of the oligosaccharyltransferase (OST) complex. OST exists in two different complex forms which contain common core subunits RPN1, RPN2, OST48, OST4, DAD1 and TMEM258, either STT3A or STT3B as catalytic subunits, and form-specific accessory subunits. OST can form stable complexes with the Sec61 complex or with both the Sec61 and TRAP complexes. The association of TUSC3 or MAGT1 with the STT3B-containing complex seems to be mutually exclusvice. As to expression, expressed at high levels in kidney, colon, heart and liver. Expressed at lower levels in intestine, spleen, brain and lung.

It localises to the cell membrane. Its subcellular location is the endoplasmic reticulum. The protein localises to the endoplasmic reticulum membrane. It participates in protein modification; protein glycosylation. Its function is as follows. Accessory component of the STT3B-containing form of the N-oligosaccharyl transferase (OST) complex which catalyzes the transfer of a high mannose oligosaccharide from a lipid-linked oligosaccharide donor to an asparagine residue within an Asn-X-Ser/Thr consensus motif in nascent polypeptide chains. Involved in N-glycosylation of STT3B-dependent substrates. Specifically required for the glycosylation of a subset of acceptor sites that are near cysteine residues; in this function seems to act redundantly with TUSC3. In its oxidized form proposed to form transient mixed disulfides with a glycoprotein substrate to facilitate access of STT3B to the unmodified acceptor site. Also has oxidoreductase-independent functions in the STT3B-containing OST complex possibly involving substrate recognition. Could indirectly play a role in Mg(2+) transport in epithelial cells. This is Dolichyl-diphosphooligosaccharide--protein glycosyltransferase subunit MAGT1 from Mus musculus (Mouse).